Here is a 249-residue protein sequence, read N- to C-terminus: tRNA pseudouridine synthase A (249 aa).

Asp52 serves as the catalytic Nucleophile. Substrate is bound at residue Tyr111.

It belongs to the tRNA pseudouridine synthase TruA family. As to quaternary structure, homodimer.

The enzyme catalyses uridine(38/39/40) in tRNA = pseudouridine(38/39/40) in tRNA. Its function is as follows. Formation of pseudouridine at positions 38, 39 and 40 in the anticodon stem and loop of transfer RNAs. This Maricaulis maris (strain MCS10) (Caulobacter maris) protein is tRNA pseudouridine synthase A.